Here is a 480-residue protein sequence, read N- to C-terminus: NADH-quinone oxidoreductase subunit N 1 (480 aa).

Helical transmembrane passes span 12-32, 38-58, 78-98, 106-126, 128-148, 163-183, 203-223, 241-261, 271-291, 303-323, 326-346, 372-392, 396-416, and 449-469; these read LSMPELILAVGAMALLMIGVF, TPTVTGLAVAVLIIAGLWLVL, FMKVLALIGSITVMVMTVGHA, FEFPVLLVLATLGMLLMISAN, LISLYLSLELQSLALYVVAAI, FVLGALSSGMMLYGMSLVYGF, LGLVFGLVFILAGLAFKISAV, TAFFAAGPKVAAISILVRIVI, WQQIIVFISIASMLLGSFAAI, SSIGHMGYALVGLAAGSMAGV, VILYMLIYMVMTLGTFACILA, ATVLTILMFSLAGIPPLAGFF, FVFVAAIEAQLYGLAIIGVLA, and LVFGLSGLFVLGYVLIGGPLG.

This sequence belongs to the complex I subunit 2 family. In terms of assembly, NDH-1 is composed of 14 different subunits. Subunits NuoA, H, J, K, L, M, N constitute the membrane sector of the complex.

It localises to the cell inner membrane. The enzyme catalyses a quinone + NADH + 5 H(+)(in) = a quinol + NAD(+) + 4 H(+)(out). In terms of biological role, NDH-1 shuttles electrons from NADH, via FMN and iron-sulfur (Fe-S) centers, to quinones in the respiratory chain. The immediate electron acceptor for the enzyme in this species is believed to be ubiquinone. Couples the redox reaction to proton translocation (for every two electrons transferred, four hydrogen ions are translocated across the cytoplasmic membrane), and thus conserves the redox energy in a proton gradient. This chain is NADH-quinone oxidoreductase subunit N 1, found in Rhizobium meliloti (strain 1021) (Ensifer meliloti).